A 256-amino-acid chain; its full sequence is Thioredoxin-dependent peroxide reductase, mitochondrial (256 aa).

Residues 1-61 (MAAAVGRLLR…KLFSTSSSYH (61 aa)) constitute a mitochondrion transit peptide. Residues 63 to 221 (PAVTQHAPYF…TLRLVKAFQY (159 aa)) enclose the Thioredoxin domain. Lys83 is subject to N6-succinyllysine. Lys91 is subject to N6-acetyllysine; alternate. Position 91 is an N6-succinyllysine; alternate (Lys91). Cys108 functions as the Cysteine sulfenic acid (-SOH) intermediate in the catalytic mechanism. Residue Thr146 is modified to Phosphothreonine.

Belongs to the peroxiredoxin family. AhpC/Prx1 subfamily. As to quaternary structure, homodimer; disulfide-linked, upon oxidation. 6 homodimers assemble to form a ring-like dodecamer. Interacts with NEK6. Interacts with LRRK2. Interacts with MAP3K13. Interacts with RPS6KC1 (via PX domain). In terms of processing, phosphorylated by LRRK2; phosphorylation reduces perodixase activity. Post-translationally, the enzyme can be inactivated by further oxidation of the cysteine sulfenic acid (C(P)-SOH) to sulphinic acid (C(P)-SO2H) and sulphonic acid (C(P)-SO3H) instead of its condensation to a disulfide bond. S-palmitoylated.

The protein resides in the mitochondrion. The protein localises to the cytoplasm. It is found in the early endosome. It carries out the reaction a hydroperoxide + [thioredoxin]-dithiol = an alcohol + [thioredoxin]-disulfide + H2O. Thiol-specific peroxidase that catalyzes the reduction of hydrogen peroxide and organic hydroperoxides to water and alcohols, respectively. Plays a role in cell protection against oxidative stress by detoxifying peroxides. Acts synergistically with MAP3K13 to regulate the activation of NF-kappa-B in the cytosol. Required for the maintenance of physical strength. The chain is Thioredoxin-dependent peroxide reductase, mitochondrial (PRDX3) from Pongo abelii (Sumatran orangutan).